The following is a 443-amino-acid chain: Threonine/serine transporter TdcC (443 aa).

Helical transmembrane passes span 22–42 (TTWT…FFPI), 44–64 (AGFG…PIAF), 97–117 (GVVI…IYGV), 140–160 (FVAL…KDLM), 163–183 (VMSY…LSLI), 207–227 (ILIT…FSPI), 261–281 (MLMV…LSPA), 311–331 (FAIT…FKSF), 366–386 (ISMI…PNIL), 389–409 (IEAM…MYAI), and 423–443 (DNVF…YKLF).

The protein belongs to the amino acid/polyamine transporter 2 family. SdaC/TdcC subfamily.

It is found in the cell inner membrane. The enzyme catalyses L-threonine(in) + H(+)(in) = L-threonine(out) + H(+)(out). The catalysed reaction is L-serine(in) + H(+)(in) = L-serine(out) + H(+)(out). In terms of biological role, involved in the import of threonine and serine into the cell, with the concomitant import of a proton (symport system). The protein is Threonine/serine transporter TdcC of Shigella boydii serotype 18 (strain CDC 3083-94 / BS512).